A 505-amino-acid polypeptide reads, in one-letter code: Lysine--tRNA ligase (505 aa).

Mg(2+)-binding residues include Glu-415 and Glu-422.

It belongs to the class-II aminoacyl-tRNA synthetase family. As to quaternary structure, homodimer. Mg(2+) is required as a cofactor.

Its subcellular location is the cytoplasm. The enzyme catalyses tRNA(Lys) + L-lysine + ATP = L-lysyl-tRNA(Lys) + AMP + diphosphate. The polypeptide is Lysine--tRNA ligase (lysS) (Salmonella typhimurium (strain LT2 / SGSC1412 / ATCC 700720)).